We begin with the raw amino-acid sequence, 769 residues long: Zinc finger protein 585B (769 aa).

A compositionally biased stretch (polar residues) spans 1-12; the sequence is MPASWTSPQKSS. Residues 1–23 are disordered; sequence MPASWTSPQKSSALAPDDHGSSY. One can recognise a KRAB domain in the interval 27-97; that stretch reads VSFRDVVINF…QGERPRHSCP (71 aa). C2H2-type zinc fingers lie at residues 158 to 180, 186 to 208, 214 to 236, 242 to 264, 270 to 292, 298 to 320, 354 to 376, 382 to 404, 410 to 432, 438 to 460, 466 to 488, 494 to 516, 522 to 544, 550 to 572, 578 to 600, 606 to 628, 634 to 656, 662 to 684, 690 to 712, 718 to 740, and 746 to 768; these read YVCI…QKAH, YKCN…QRIH, YQCS…EKIH, HECT…QKIH, YICI…RRIH, YECN…QRIH, SICT…QRIH, YACS…QRIH, YVCM…QIIH, YKCG…KRIH, YVCN…QKTH, YICS…QRIH, YECN…QKIH, YECH…QKIH, YVCT…QRIH, YECS…QPLH, YVCA…QKTH, YICS…HRIH, YECS…QRIH, YVCA…QTTH, and YKCG…QGSH.

It belongs to the krueppel C2H2-type zinc-finger protein family.

The protein resides in the nucleus. Its function is as follows. May be involved in transcriptional regulation. The protein is Zinc finger protein 585B (ZNF585B) of Pongo abelii (Sumatran orangutan).